The sequence spans 112 residues: Putative pterin-4-alpha-carbinolamine dehydratase (112 aa).

A disordered region spans residues 1-30 (MSDELQSRTCTPCRGDVPPMTKAEAKRQLA).

The protein belongs to the pterin-4-alpha-carbinolamine dehydratase family.

The enzyme catalyses (4aS,6R)-4a-hydroxy-L-erythro-5,6,7,8-tetrahydrobiopterin = (6R)-L-erythro-6,7-dihydrobiopterin + H2O. The sequence is that of Putative pterin-4-alpha-carbinolamine dehydratase from Aromatoleum aromaticum (strain DSM 19018 / LMG 30748 / EbN1) (Azoarcus sp. (strain EbN1)).